The sequence spans 191 residues: Probable nicotinate-nucleotide adenylyltransferase (191 aa).

Belongs to the NadD family.

It carries out the reaction nicotinate beta-D-ribonucleotide + ATP + H(+) = deamido-NAD(+) + diphosphate. Its pathway is cofactor biosynthesis; NAD(+) biosynthesis; deamido-NAD(+) from nicotinate D-ribonucleotide: step 1/1. Functionally, catalyzes the reversible adenylation of nicotinate mononucleotide (NaMN) to nicotinic acid adenine dinucleotide (NaAD). In Oceanobacillus iheyensis (strain DSM 14371 / CIP 107618 / JCM 11309 / KCTC 3954 / HTE831), this protein is Probable nicotinate-nucleotide adenylyltransferase.